Here is a 534-residue protein sequence, read N- to C-terminus: Melanopsin-B (534 aa).

At 1-32 (MDLGKTVEYGTHRQDAIAQIDVPDQVLYTIGS) the chain is on the extracellular side. The chain crosses the membrane as a helical span at residues 33 to 53 (FILIIGSVGIIGNMLVLYAFY). The Cytoplasmic portion of the chain corresponds to 54–64 (RNKKLRTAPNY). A helical membrane pass occupies residues 65 to 85 (FIINLAISDFLMSATQAPVCF). The Extracellular segment spans residues 86–102 (LSSLHREWILGDIGCNV). Residues C100 and C178 are joined by a disulfide bond. The helical transmembrane segment at 103 to 123 (YAFCGALFGITSMMTLLAISI) threads the bilayer. Residues 124–146 (NRYIVITKPLQSIQWSSKKRTSQ) lie on the Cytoplasmic side of the membrane. Residues 147–167 (IIVLVWMYSLMWSLAPLLGWS) traverse the membrane as a helical segment. Residues 168–198 (SYVPEGLRISCTWDYVTSTMSNRSYTMMLCC) lie on the Extracellular side of the membrane. N189 carries an N-linked (GlcNAc...) asparagine glycan. Residues 199 to 219 (CVFFIPLIVISHCYLFMFLAI) traverse the membrane as a helical segment. Residues 220–250 (RSTGRNVQKLGSYGRQSFLSQSMKNEWKMAK) lie on the Cytoplasmic side of the membrane. The helical transmembrane segment at 251-271 (IAFVIIIVFVLSWSPYACVTL) threads the bilayer. The Extracellular segment spans residues 272–286 (IAWAGHGKSLTPYSK). The helical transmembrane segment at 287-307 (TVPAVIAKASAIYNPIIYGII) threads the bilayer. K294 is modified (N6-(retinylidene)lysine). Residues 308 to 534 (HPKYRETIHK…LYEVVERFLS (227 aa)) are Cytoplasmic-facing. The segment at 478-501 (SNISETKEEHDNNSEEKSKRTEEE) is disordered. A compositionally biased stretch (basic and acidic residues) spans 482-499 (ETKEEHDNNSEEKSKRTE).

The protein belongs to the G-protein coupled receptor 1 family. Opsin subfamily. In terms of tissue distribution, highest level in the iris, high level in the inner nuclear layer, possibly in horizontal cells, and lowest level in retinal pigment epithelium. Expressed in melanophore cells of the skin.

The protein resides in the cell membrane. In terms of biological role, photoreceptor implicated in non-image-forming responses to light. May be able to isomerize covalently bound all-trans retinal back to 11-cis retinal. This is Melanopsin-B from Xenopus laevis (African clawed frog).